Consider the following 625-residue polypeptide: RecQ-mediated genome instability protein 1 (625 aa).

Position 1 is an N-acetylmethionine (Met1). Ser225 carries the post-translational modification Phosphoserine. Residues 257–282 (LTANNDTSSERCFTTGSSSNTIPTRQ) form a disordered region. A phosphoserine mark is found at Ser284 and Ser292. Glycyl lysine isopeptide (Lys-Gly) (interchain with G-Cter in SUMO2) cross-links involve residues Lys334, Lys387, and Lys426.

This sequence belongs to the RMI1 family. In terms of assembly, component of the RMI complex, containing at least TOP3A, RMI1 and RMI2. The RMI complex interacts with BLM. Directly interacts with RMI2 and TOP3A. May bind DHJ. Interacts (via N-terminal region) with BLM; the interaction is direct.

It localises to the nucleus. Essential component of the RMI complex, a complex that plays an important role in the processing of homologous recombination intermediates to limit DNA crossover formation in cells. Promotes TOP3A binding to double Holliday junctions (DHJ) and hence stimulates TOP3A-mediated dissolution. Required for BLM phosphorylation during mitosis. Within the BLM complex, required for BLM and TOP3A stability. This chain is RecQ-mediated genome instability protein 1 (RMI1), found in Homo sapiens (Human).